The primary structure comprises 740 residues: Ion-translocating oxidoreductase complex subunit C (740 aa).

2 4Fe-4S ferredoxin-type domains span residues 369–397 (GEPQEEQSCIRCSACADACPADLLPQQLY) and 407–436 (KATTHNIADCIECGACAWVCPSNIPLVQYF). 8 residues coordinate [4Fe-4S] cluster: cysteine 377, cysteine 380, cysteine 383, cysteine 387, cysteine 416, cysteine 419, cysteine 422, and cysteine 426. Positions 602–716 (KLEQQQANAE…EPEEQVDPRK (115 aa)) are disordered.

Belongs to the 4Fe4S bacterial-type ferredoxin family. RnfC subfamily. As to quaternary structure, the complex is composed of six subunits: RsxA, RsxB, RsxC, RsxD, RsxE and RsxG. [4Fe-4S] cluster is required as a cofactor.

Its subcellular location is the cell inner membrane. Functionally, part of a membrane-bound complex that couples electron transfer with translocation of ions across the membrane. Required to maintain the reduced state of SoxR. The chain is Ion-translocating oxidoreductase complex subunit C from Escherichia coli (strain SE11).